Reading from the N-terminus, the 194-residue chain is Fe/S biogenesis protein NfuA (194 aa).

Residues C152 and C155 each coordinate [4Fe-4S] cluster.

This sequence belongs to the NfuA family. As to quaternary structure, homodimer. It depends on [4Fe-4S] cluster as a cofactor.

In terms of biological role, involved in iron-sulfur cluster biogenesis. Binds a 4Fe-4S cluster, can transfer this cluster to apoproteins, and thereby intervenes in the maturation of Fe/S proteins. Could also act as a scaffold/chaperone for damaged Fe/S proteins. The protein is Fe/S biogenesis protein NfuA of Pseudomonas aeruginosa (strain LESB58).